A 424-amino-acid polypeptide reads, in one-letter code: Glucose-1-phosphate adenylyltransferase (424 aa).

Alpha-D-glucose 1-phosphate-binding positions include Y112, G177, E192–K193, and S210.

This sequence belongs to the bacterial/plant glucose-1-phosphate adenylyltransferase family. In terms of assembly, homotetramer.

The enzyme catalyses alpha-D-glucose 1-phosphate + ATP + H(+) = ADP-alpha-D-glucose + diphosphate. Its pathway is glycan biosynthesis; glycogen biosynthesis. Functionally, involved in the biosynthesis of ADP-glucose, a building block required for the elongation reactions to produce glycogen. Catalyzes the reaction between ATP and alpha-D-glucose 1-phosphate (G1P) to produce pyrophosphate and ADP-Glc. This Methylococcus capsulatus (strain ATCC 33009 / NCIMB 11132 / Bath) protein is Glucose-1-phosphate adenylyltransferase.